The primary structure comprises 223 residues: Glutathione S-transferase alpha I (223 aa).

The residue at position 1 (methionine 1) is an N-acetylmethionine. At alanine 2 the chain carries N-acetylalanine; in Glutathione S-transferase alpha I, N-terminally processed. One can recognise a GST N-terminal domain in the interval 3 to 83 (RKPLLHYFNG…YVANKHNLYG (81 aa)). Lysine 4 is modified (N6-succinyllysine). Residues tyrosine 9, arginine 45, 54–55 (QV), and 67–68 (QT) contribute to the glutathione site. Positions 85 to 208 (DMKERALIDM…QPGSQRKPPM (124 aa)) constitute a GST C-terminal domain.

This sequence belongs to the GST superfamily. Alpha family. Homodimer or heterodimer of GSTA1 and GSTA2. Liver and lung.

The protein localises to the cytoplasm. It catalyses the reaction RX + glutathione = an S-substituted glutathione + a halide anion + H(+). It carries out the reaction prostaglandin A2 + glutathione = prostaglandin A2-S-(R)-glutathione. The enzyme catalyses prostaglandin J2 + glutathione = prostaglandin J2-S-(R)-glutathione. The catalysed reaction is (13S)-hydroperoxy-(9Z,11E)-octadecadienoate + 2 glutathione = (13S)-hydroxy-(9Z,11E)-octadecadienoate + glutathione disulfide + H2O. It catalyses the reaction androst-5-ene-3,17-dione = androst-4-ene-3,17-dione. In terms of biological role, glutathione S-transferase that catalyzes the nucleophilic attack of the sulfur atom of glutathione on the electrophilic groups of a wide range of exogenous and endogenous compounds. Involved in the formation of glutathione conjugates of both prostaglandin A2 (PGA2) and prostaglandin J2 (PGJ2). It also catalyzes the isomerization of D5-androstene-3,17-dione (AD) into D4-androstene-3,17-dione and may therefore play an important role in hormone biosynthesis. Through its glutathione-dependent peroxidase activity toward the fatty acid hydroperoxide (13S)-hydroperoxy-(9Z,11E)-octadecadienoate/13-HPODE it is also involved in the metabolism of oxidized linoleic acid. The protein is Glutathione S-transferase alpha I of Oryctolagus cuniculus (Rabbit).